A 786-amino-acid chain; its full sequence is Endonuclease MutS2 (786 aa).

Residue 332–339 participates in ATP binding; that stretch reads GPNTGGKT. The Smr domain maps to 711–786; sequence IDLRGMDSEE…GTGVTVVILK (76 aa).

The protein belongs to the DNA mismatch repair MutS family. MutS2 subfamily. Homodimer. Binds to stalled ribosomes, contacting rRNA.

Endonuclease that is involved in the suppression of homologous recombination and thus may have a key role in the control of bacterial genetic diversity. Functionally, acts as a ribosome collision sensor, splitting the ribosome into its 2 subunits. Detects stalled/collided 70S ribosomes which it binds and splits by an ATP-hydrolysis driven conformational change. Acts upstream of the ribosome quality control system (RQC), a ribosome-associated complex that mediates the extraction of incompletely synthesized nascent chains from stalled ribosomes and their subsequent degradation. Probably generates substrates for RQC. This Clostridium perfringens (strain ATCC 13124 / DSM 756 / JCM 1290 / NCIMB 6125 / NCTC 8237 / Type A) protein is Endonuclease MutS2.